Here is a 423-residue protein sequence, read N- to C-terminus: Glutamyl-tRNA reductase (423 aa).

Residues 49 to 52 (TCNR), Ser111, 116 to 118 (EPQ), and Gln122 contribute to the substrate site. Catalysis depends on Cys50, which acts as the Nucleophile. Position 191–196 (191–196 (GAGEMS)) interacts with NADP(+).

It belongs to the glutamyl-tRNA reductase family. As to quaternary structure, homodimer.

The catalysed reaction is (S)-4-amino-5-oxopentanoate + tRNA(Glu) + NADP(+) = L-glutamyl-tRNA(Glu) + NADPH + H(+). Its pathway is porphyrin-containing compound metabolism; protoporphyrin-IX biosynthesis; 5-aminolevulinate from L-glutamyl-tRNA(Glu): step 1/2. Functionally, catalyzes the NADPH-dependent reduction of glutamyl-tRNA(Glu) to glutamate 1-semialdehyde (GSA). This Syntrophus aciditrophicus (strain SB) protein is Glutamyl-tRNA reductase.